The chain runs to 112 residues: Large ribosomal subunit protein eL34A (112 aa).

This sequence belongs to the eukaryotic ribosomal protein eL34 family. Component of the large ribosomal subunit (LSU). Mature yeast ribosomes consist of a small (40S) and a large (60S) subunit. The 40S small subunit contains 1 molecule of ribosomal RNA (18S rRNA) and at least 33 different proteins. The large 60S subunit contains 3 rRNA molecules (25S, 5.8S and 5S rRNA) and at least 46 different proteins.

The protein resides in the cytoplasm. Functionally, component of the ribosome, a large ribonucleoprotein complex responsible for the synthesis of proteins in the cell. The small ribosomal subunit (SSU) binds messenger RNAs (mRNAs) and translates the encoded message by selecting cognate aminoacyl-transfer RNA (tRNA) molecules. The large subunit (LSU) contains the ribosomal catalytic site termed the peptidyl transferase center (PTC), which catalyzes the formation of peptide bonds, thereby polymerizing the amino acids delivered by tRNAs into a polypeptide chain. The nascent polypeptides leave the ribosome through a tunnel in the LSU and interact with protein factors that function in enzymatic processing, targeting, and the membrane insertion of nascent chains at the exit of the ribosomal tunnel. In Schizosaccharomyces pombe (strain 972 / ATCC 24843) (Fission yeast), this protein is Large ribosomal subunit protein eL34A (rpl3401).